Reading from the N-terminus, the 957-residue chain is Outer kinetochore KNL1 complex subunit knl-1 (957 aa).

Copy 1 of the repeat occupies Met-87 to Thr-90. Positions Met-87–Thr-393 are 8 X 4 AA repeats of M-[D/E]-[I/L/M]-[S/T]. The disordered stretch occupies residues Ile-89–Met-111. Polar residues predominate over residues Gly-91–Asn-106. A run of 7 repeats spans residues Met-109 to Ser-112, Met-206 to Thr-209, Met-251 to Thr-254, Met-282 to Thr-285, Met-326 to Thr-329, Met-367 to Thr-370, and Met-390 to Thr-393. The disordered stretch occupies residues Ser-476–Ser-504. Residues Lys-830–Arg-950 adopt a coiled-coil conformation.

As to quaternary structure, component of the KNL1 complex composed of knl-1 and kbp-5. Part of the ten-subunit outer kinetochore KMN network that includes the KNL1, MIS12 and NDC80 complexes. Interacts with the protein phosphatase 1 (PP1) catalytic subunit gsp-1; the interaction is direct. Interacts with the protein phosphatase 1 (PP1) catalytic subunit gsp-2; the interaction is direct. Interacts with the MIS12 complex subunits kbp-1, kbp-2 and mis-12. Interacts with the NDC80 complex components ndc-80 and him-10. Interacts with knl-3. Interacts with kbp-3. Interacts with kbp-4. Interacts with kbp-5.

Its subcellular location is the cytoplasm. It is found in the cell cortex. The protein resides in the chromosome. It localises to the centromere. The protein localises to the kinetochore. Its function is as follows. Acts as a component of the outer kinetochore KNL1 complex that serves as a docking point for spindle assembly checkpoint components and mediates microtubule-kinetochore interactions. Kinetochores, consisting of a centromere-associated inner segment and a microtubule-contacting outer segment, play a crucial role in chromosome segregation by mediating the physical connection between centromeric DNA and spindle microtubules. The outer kinetochore is made up of the ten-subunit KMN network, comprising the MIS12, NDC80 and KNL1 complexes, and auxiliary microtubule-associated components; together they connect the outer kinetochore with the inner kinetochore, bind microtubules, and mediate interactions with mitotic checkpoint proteins that delay anaphase until chromosomes are bioriented on the spindle. Binds the protein phosphatase 1 catalytic subunits gsp-1 and gsp-2, which has a role in delaying formation of load-bearing kinetochore-microtubule attachments. Required for the recruitment of spindle-assembly checkpoint components bub-1 and mdf-1/2 to unattached kinetochores. Binds microtubules which plays a role in silencing of the spindle assembly checkpoint, but not the formation of load-bearing microtubule-kinetochore attachments. Has a role in the correct localization of the spindly-like protein spdl-1 and the RZZ complex that is composed of rod-1, czw-1 and zwl-1 to kinetochores. This chain is Outer kinetochore KNL1 complex subunit knl-1, found in Caenorhabditis briggsae.